A 247-amino-acid polypeptide reads, in one-letter code: 1-(5-phosphoribosyl)-5-[(5-phosphoribosylamino)methylideneamino] imidazole-4-carboxamide isomerase 1 (247 aa).

Glu-8 acts as the Proton acceptor in catalysis. Asp-128 serves as the catalytic Proton donor.

It belongs to the HisA/HisF family.

The protein localises to the cytoplasm. The catalysed reaction is 1-(5-phospho-beta-D-ribosyl)-5-[(5-phospho-beta-D-ribosylamino)methylideneamino]imidazole-4-carboxamide = 5-[(5-phospho-1-deoxy-D-ribulos-1-ylimino)methylamino]-1-(5-phospho-beta-D-ribosyl)imidazole-4-carboxamide. It functions in the pathway amino-acid biosynthesis; L-histidine biosynthesis; L-histidine from 5-phospho-alpha-D-ribose 1-diphosphate: step 4/9. This is 1-(5-phosphoribosyl)-5-[(5-phosphoribosylamino)methylideneamino] imidazole-4-carboxamide isomerase 1 from Ruegeria sp. (strain TM1040) (Silicibacter sp.).